The sequence spans 325 residues: Probable ABC transporter permease YtrD (325 aa).

The next 8 membrane-spanning stretches (helical) occupy residues 16-36 (VALV…ILNM), 63-83 (SSFI…QLGI), 113-133 (MVIV…IMLL), 146-166 (LGMI…GALT), 179-199 (VAIS…ILFG), 233-253 (YLVI…ISFV), 272-292 (PVQI…GFTA), and 298-318 (GYLI…YFAI).

The protein belongs to the ABC-5 integral membrane protein family. As to quaternary structure, the complex is composed of 2 ATP-binding proteins (YtrB and YtrE), 2 transmembrane proteins (YtrC and YtrD) and a solute-binding protein (YtrF).

The protein localises to the cell membrane. In terms of biological role, part of the ABC transporter complex YtrBCDEF that plays a role in acetoin utilization during stationary phase and sporulation. The protein is Probable ABC transporter permease YtrD (ytrD) of Bacillus subtilis (strain 168).